Consider the following 95-residue polypeptide: Co-chaperonin GroES (95 aa).

A disordered region spans residues 36 to 55; the sequence is QEGEVVAVGSGKTLDDGSKV.

The protein belongs to the GroES chaperonin family. In terms of assembly, heptamer of 7 subunits arranged in a ring. Interacts with the chaperonin GroEL.

The protein localises to the cytoplasm. Its function is as follows. Together with the chaperonin GroEL, plays an essential role in assisting protein folding. The GroEL-GroES system forms a nano-cage that allows encapsulation of the non-native substrate proteins and provides a physical environment optimized to promote and accelerate protein folding. GroES binds to the apical surface of the GroEL ring, thereby capping the opening of the GroEL channel. This Natranaerobius thermophilus (strain ATCC BAA-1301 / DSM 18059 / JW/NM-WN-LF) protein is Co-chaperonin GroES.